Reading from the N-terminus, the 601-residue chain is Transcription factor Ken (601 aa).

The BTB domain occupies Ala-33–Ser-101. Disordered regions lie at residues Ala-188–Pro-276, Leu-331–Pro-365, and Asp-471–Asn-491. 2 stretches are compositionally biased toward basic and acidic residues: residues Glu-190 to Lys-200 and Cys-207 to Lys-216. Over residues Asn-223–Gly-234 the composition is skewed to polar residues. A compositionally biased stretch (low complexity) spans Ser-235–Gln-247. Residues Gln-248 to His-258 are compositionally biased toward basic residues. A compositionally biased stretch (low complexity) spans Asn-259 to Asn-275. Positions Arg-476–Ser-490 are enriched in low complexity. 3 consecutive C2H2-type zinc fingers follow at residues Tyr-500–His-522, Phe-528–His-551, and Tyr-567–His-590.

Expressed from stage 5 in two rather faint stripes at positions of 64% (anterior domain; AD) and 17% (posterior domain; PD) egg length. During early gastrulation, at stage 6, these two stripes become more evident and detectable at the region posterior to the cephalic furrow and in the hindgut primordium. The AD disappears as gastrulation proceeds, while the PD remains. At stage 15, the AD appears again in the foregut, and PD expression in the hindgut and anal pad. In imaginal disks, it is ubiquitously expressed in both males and females in genital and eye-antennal disks. Not expressed in the brain. In genital disks, it is expressed along the margin of the anterior bulbus in males, while in females it is expressed in the posterior compartment along the anterior-posterior border, with medial expansion in the most posterior region.

It localises to the nucleus. Its function is as follows. Transcription factor required for terminalia development. Negative regulator of the JAK/STAT pathway: represses JAK/STAT-dependent expression of ventral veins lacking (vvl) in the posterior spiracles. The sequence is that of Transcription factor Ken (ken) from Drosophila melanogaster (Fruit fly).